The following is a 719-amino-acid chain: DNA ligase (719 aa).

NAD(+)-binding positions include 42–46 (DAEYD), 91–92 (SL), and glutamate 125. Lysine 127 serves as the catalytic N6-AMP-lysine intermediate. Arginine 148, glutamate 184, lysine 300, and lysine 324 together coordinate NAD(+). 4 residues coordinate Zn(2+): cysteine 429, cysteine 432, cysteine 447, and cysteine 453. In terms of domain architecture, BRCT spans 638–719 (TASSPIAGKT…WLQLIEGSYI (82 aa)).

Belongs to the NAD-dependent DNA ligase family. LigA subfamily. Mg(2+) serves as cofactor. The cofactor is Mn(2+).

It carries out the reaction NAD(+) + (deoxyribonucleotide)n-3'-hydroxyl + 5'-phospho-(deoxyribonucleotide)m = (deoxyribonucleotide)n+m + AMP + beta-nicotinamide D-nucleotide.. DNA ligase that catalyzes the formation of phosphodiester linkages between 5'-phosphoryl and 3'-hydroxyl groups in double-stranded DNA using NAD as a coenzyme and as the energy source for the reaction. It is essential for DNA replication and repair of damaged DNA. In Bartonella quintana (strain Toulouse) (Rochalimaea quintana), this protein is DNA ligase.